Here is a 372-residue protein sequence, read N- to C-terminus: Glutamate 5-kinase (372 aa).

Residue Lys-9 coordinates ATP. Substrate is bound by residues Ser-49, Asp-136, and Asn-148. ATP contacts are provided by residues 168 to 169 and 210 to 216; these read TD and TGGMKSK. In terms of domain architecture, PUA spans 276 to 360; sequence EGKVFIDDGA…PAIEVIHRDS (85 aa).

Belongs to the glutamate 5-kinase family.

The protein localises to the cytoplasm. The catalysed reaction is L-glutamate + ATP = L-glutamyl 5-phosphate + ADP. Its pathway is amino-acid biosynthesis; L-proline biosynthesis; L-glutamate 5-semialdehyde from L-glutamate: step 1/2. Functionally, catalyzes the transfer of a phosphate group to glutamate to form L-glutamate 5-phosphate. This is Glutamate 5-kinase from Oceanobacillus iheyensis (strain DSM 14371 / CIP 107618 / JCM 11309 / KCTC 3954 / HTE831).